A 464-amino-acid chain; its full sequence is Siroheme synthase (464 aa).

The segment at 1 to 203 (MEFLPLFHNL…GQGAEAERLL (203 aa)) is precorrin-2 dehydrogenase /sirohydrochlorin ferrochelatase. NAD(+) contacts are provided by residues 22–23 (EI) and 43–44 (PE). At Ser-128 the chain carries Phosphoserine. The tract at residues 216-464 (GEVYLVGAGP…AWFEGAQATV (249 aa)) is uroporphyrinogen-III C-methyltransferase. Position 225 (Pro-225) interacts with S-adenosyl-L-methionine. Asp-248 acts as the Proton acceptor in catalysis. Catalysis depends on Lys-270, which acts as the Proton donor. S-adenosyl-L-methionine contacts are provided by residues 301–303 (GGD), Ile-306, 331–332 (TA), Met-383, and Gly-412.

This sequence in the N-terminal section; belongs to the precorrin-2 dehydrogenase / sirohydrochlorin ferrochelatase family. The protein in the C-terminal section; belongs to the precorrin methyltransferase family.

It carries out the reaction uroporphyrinogen III + 2 S-adenosyl-L-methionine = precorrin-2 + 2 S-adenosyl-L-homocysteine + H(+). It catalyses the reaction precorrin-2 + NAD(+) = sirohydrochlorin + NADH + 2 H(+). The catalysed reaction is siroheme + 2 H(+) = sirohydrochlorin + Fe(2+). It functions in the pathway cofactor biosynthesis; adenosylcobalamin biosynthesis; precorrin-2 from uroporphyrinogen III: step 1/1. Its pathway is cofactor biosynthesis; adenosylcobalamin biosynthesis; sirohydrochlorin from precorrin-2: step 1/1. The protein operates within porphyrin-containing compound metabolism; siroheme biosynthesis; precorrin-2 from uroporphyrinogen III: step 1/1. It participates in porphyrin-containing compound metabolism; siroheme biosynthesis; siroheme from sirohydrochlorin: step 1/1. It functions in the pathway porphyrin-containing compound metabolism; siroheme biosynthesis; sirohydrochlorin from precorrin-2: step 1/1. Functionally, multifunctional enzyme that catalyzes the SAM-dependent methylations of uroporphyrinogen III at position C-2 and C-7 to form precorrin-2 via precorrin-1. Then it catalyzes the NAD-dependent ring dehydrogenation of precorrin-2 to yield sirohydrochlorin. Finally, it catalyzes the ferrochelation of sirohydrochlorin to yield siroheme. The sequence is that of Siroheme synthase from Pseudomonas savastanoi pv. phaseolicola (strain 1448A / Race 6) (Pseudomonas syringae pv. phaseolicola (strain 1448A / Race 6)).